The following is a 90-amino-acid chain: Probable small nuclear ribonucleoprotein E (90 aa).

The 76-residue stretch at 14–89 (VNLIFRYLQN…ITLIHAAAQE (76 aa)) folds into the Sm domain.

The protein belongs to the snRNP Sm proteins family. As to quaternary structure, core component of the spliceosomal U1, U2, U4 and U5 small nuclear ribonucleoproteins (snRNPs), the building blocks of the spliceosome.

It is found in the nucleus. The protein localises to the cytoplasm. Its subcellular location is the cytosol. Its function is as follows. Plays a role in pre-mRNA splicing as a core component of the spliceosomal U1, U2, U4 and U5 small nuclear ribonucleoproteins (snRNPs), the building blocks of the spliceosome. The chain is Probable small nuclear ribonucleoprotein E (snr-6) from Caenorhabditis briggsae.